The chain runs to 169 residues: MKPSSSNSRSKGHAKARRKTREELDQEARDRKRLKKRRGHAPGSRAAGGNTTSGSKGQNAPKDPRIGSKTPIPLGVAEKVTKQHKPKSEKPMLSPQAELELLETDERLDALLERLEAGETLSAEEQSWVDAKLDRIDELMQKLGLSYDDDEEEEEDEKQEDMMRLLRGN.

Disordered regions lie at residues 1 to 98 and 144 to 169; these read MKPS…PQAE and GLSYDDDEEEEEDEKQEDMMRLLRGN. Over residues 10 to 19 the composition is skewed to basic residues; the sequence is SKGHAKARRK. Over residues 20–30 the composition is skewed to basic and acidic residues; that stretch reads TREELDQEARD. A compositionally biased stretch (basic residues) spans 31-40; sequence RKRLKKRRGH. Over residues 49 to 58 the composition is skewed to polar residues; the sequence is GNTTSGSKGQ. The segment covering 147-159 has biased composition (acidic residues); the sequence is YDDDEEEEEDEKQ. Over residues 160–169 the composition is skewed to basic and acidic residues; sequence EDMMRLLRGN.

This sequence belongs to the YihI family. Interacts with Der.

Its function is as follows. A GTPase-activating protein (GAP) that modifies Der/EngA GTPase function. May play a role in ribosome biogenesis. The protein is Der GTPase-activating protein YihI of Escherichia coli O6:K15:H31 (strain 536 / UPEC).